The following is a 50-amino-acid chain: Protein PsbN (50 aa).

A helical transmembrane segment spans residues 14-34 (VAVTILAILLALTGFGLWTAF).

Belongs to the PsbN family.

It localises to the cellular thylakoid membrane. May play a role in photosystem I and II biogenesis. This is Protein PsbN from Prochlorococcus marinus (strain MIT 9312).